Here is a 172-residue protein sequence, read N- to C-terminus: dCTP deaminase (172 aa).

DCTP-binding positions include 97–102 (RSSFAR) and D113. E123 (proton donor/acceptor) is an active-site residue. DCTP contacts are provided by Y155 and Q162.

This sequence belongs to the dCTP deaminase family. As to quaternary structure, homotrimer.

It catalyses the reaction dCTP + H2O + H(+) = dUTP + NH4(+). The protein operates within pyrimidine metabolism; dUMP biosynthesis; dUMP from dCTP (dUTP route): step 1/2. Its function is as follows. Catalyzes the deamination of dCTP to dUTP. The protein is dCTP deaminase of Metallosphaera sedula (strain ATCC 51363 / DSM 5348 / JCM 9185 / NBRC 15509 / TH2).